The chain runs to 156 residues: Transcription antitermination protein NusB (156 aa).

It belongs to the NusB family.

Its function is as follows. Involved in transcription antitermination. Required for transcription of ribosomal RNA (rRNA) genes. Binds specifically to the boxA antiterminator sequence of the ribosomal RNA (rrn) operons. This Rickettsia africae (strain ESF-5) protein is Transcription antitermination protein NusB.